The chain runs to 128 residues: UPF0325 protein YaeH (128 aa).

Belongs to the UPF0325 family.

The sequence is that of UPF0325 protein YaeH from Shigella boydii serotype 18 (strain CDC 3083-94 / BS512).